Consider the following 159-residue polypeptide: 3-dehydroquinate dehydratase (159 aa).

The Proton acceptor role is filled by tyrosine 31. Substrate-binding residues include asparagine 82, histidine 88, and aspartate 95. Histidine 109 acts as the Proton donor in catalysis. Substrate is bound by residues 110-111 and arginine 120; that span reads IS.

It belongs to the type-II 3-dehydroquinase family. In terms of assembly, homododecamer.

It carries out the reaction 3-dehydroquinate = 3-dehydroshikimate + H2O. It participates in metabolic intermediate biosynthesis; chorismate biosynthesis; chorismate from D-erythrose 4-phosphate and phosphoenolpyruvate: step 3/7. Functionally, catalyzes a trans-dehydration via an enolate intermediate. This Streptomyces avermitilis (strain ATCC 31267 / DSM 46492 / JCM 5070 / NBRC 14893 / NCIMB 12804 / NRRL 8165 / MA-4680) protein is 3-dehydroquinate dehydratase.